The sequence spans 313 residues: Heterogeneous nuclear ribonucleoproteins C1/C2 (313 aa).

Alanine 2 bears the N-acetylalanine mark. Residues lysine 8, lysine 50, lysine 89, and lysine 94 each participate in a glycyl lysine isopeptide (Lys-Gly) (interchain with G-Cter in SUMO2) cross-link. Residues 16–87 (SRVFIGNLNT…QVLDINLAAE (72 aa)) form the RRM domain. A phosphoserine mark is found at serine 113, serine 115, and serine 121. Disordered regions lie at residues 139–191 (YPAR…KLKG) and 219–313 (EKEQ…EDDS). The Nuclear localization signal signature appears at 155–161 (PSKRQRV). A phosphoserine mark is found at serine 162 and serine 166. Positions 175-186 (SKSGQRGSSSKS) are enriched in low complexity. Lysine 176 is modified (N6-acetyllysine; alternate). Lysine 176 participates in a covalent cross-link: Glycyl lysine isopeptide (Lys-Gly) (interchain with G-Cter in SUMO2); alternate. Residues 191–226 (GDDLQAIKKELTQIKQKVDSLLESLEKIEKEQSKQA) are a coiled coil. Lysine 224 is covalently cross-linked (Glycyl lysine isopeptide (Lys-Gly) (interchain with G-Cter in SUMO2)). Phosphoserine is present on residues serine 229, serine 231, and serine 232. Residue lysine 237 forms a Glycyl lysine isopeptide (Lys-Gly) (interchain with G-Cter in SUMO2) linkage. Lysine 240 is covalently cross-linked (Glycyl lysine isopeptide (Lys-Gly) (interchain with G-Cter in SUMO2); alternate). A Glycyl lysine isopeptide (Lys-Gly) (interchain with G-Cter in SUMO1); alternate cross-link involves residue lysine 240. Phosphoserine occurs at positions 241, 246, 247, and 249. A compositionally biased stretch (basic and acidic residues) spans 250–261 (VKKDETNVKMES). Residues lysine 251 and lysine 252 each participate in a glycyl lysine isopeptide (Lys-Gly) (interchain with G-Cter in SUMO2) cross-link. Lysine 258 is covalently cross-linked (Glycyl lysine isopeptide (Lys-Gly) (interchain with G-Cter in SUMO2); alternate). Lysine 258 is covalently cross-linked (Glycyl lysine isopeptide (Lys-Gly) (interchain with G-Cter in SUMO); alternate). Phosphoserine is present on residues serine 261 and serine 268. Residues 263-284 (AGADDSAEEGDLLDDDDNEDRG) show a composition bias toward acidic residues. The span at 285–294 (DDQLELKDDE) shows a compositional bias: basic and acidic residues. Acidic residues predominate over residues 295–313 (KEPEEGEDDRDSANGEDDS). A phosphoserine mark is found at serine 306 and serine 313.

The protein belongs to the RRM HNRPC family. RALY subfamily. In terms of assembly, tetramer composed of 3 copies of isoform C1 and 1 copy of isoform C2. Assembly of 3 tetramers with bound pre-mRNA gives rise to a 19S complex that interacts with HNRNPA2B1 tetramers. Component of the 40S hnRNP particle. Identified in the spliceosome C complex. Interacts with IGF2BP1. Interacts with DHX9; this interaction is direct, enhanced probably by their concomitant binding to RNA and mediates the attachment to actin filaments. Interacts with PPIA/CYPA. Phosphorylated on Ser-268 and Ser-306 in resting cells. Post-translationally, sumoylated. Sumoylation reduces affinity for mRNA. In terms of processing, ubiquitinated and degraded after nucleo-cytoplasmic transport by YWHAE.

It is found in the nucleus. In terms of biological role, binds pre-mRNA and nucleates the assembly of 40S hnRNP particles. Interacts with poly-U tracts in the 3'-UTR or 5'-UTR of mRNA and modulates the stability and the level of translation of bound mRNA molecules. Single HNRNPC tetramers bind 230-240 nucleotides. Trimers of HNRNPC tetramers bind 700 nucleotides. May play a role in the early steps of spliceosome assembly and pre-mRNA splicing. N6-methyladenosine (m6A) has been shown to alter the local structure in mRNAs and long non-coding RNAs (lncRNAs) via a mechanism named 'm(6)A-switch', facilitating binding of HNRNPC, leading to regulation of mRNA splicing. This chain is Heterogeneous nuclear ribonucleoproteins C1/C2 (Hnrnpc), found in Mus musculus (Mouse).